Consider the following 292-residue polypeptide: High-affinity heme uptake system protein IsdE (292 aa).

Positions 1 to 19 (MRIIKYLTILVISVVILTS) are cleaved as a signal peptide. C20 carries N-palmitoyl cysteine lipidation. A lipid anchor (S-diacylglycerol cysteine) is attached at C20. In terms of domain architecture, Fe/B12 periplasmic-binding spans 35–291 (RIVPTTVALT…QLYDLFYKDK (257 aa)). Residues V41, A42, S60, Y61, M78, and H229 each coordinate heme.

It belongs to the bacterial solute-binding protein 8 family. It depends on heme b as a cofactor.

The protein resides in the cell membrane. In terms of biological role, involved in heme (porphyrin) scavenging. Binds Fe(2+) and Fe(3+) heme but the largest fraction is Fe(2+) heme. Functions as a high-affinity heme binding protein and probably has a role in relaying heme-iron from cell wall-anchored isd proteins receptors to the probable permease IsdF. The sequence is that of High-affinity heme uptake system protein IsdE (isdE) from Staphylococcus aureus (strain Mu3 / ATCC 700698).